A 441-amino-acid polypeptide reads, in one-letter code: DNA-binding protein (441 aa).

The segment covering 1–18 has biased composition (basic residues); it reads MERTPKRAHGFRSTKPVK. Residues 1 to 85 form a disordered region; it reads MERTPKRAHG…EESPEAPLSD (85 aa). 2 stretches are compositionally biased toward acidic residues: residues 24–33 and 67–79; these read MMEEEEEEVE and VDDE…EESP. Positions 191 and 193 each coordinate Zn(2+). The segment at 204–236 is flexible loop; it reads VELNPSSEAGKRALAEQNGVIEKNRFGRQVVVL. The Zn(2+) site is built by cysteine 244, cysteine 262, cysteine 305, cysteine 307, cysteine 359, and cysteine 380. The C-terminal arm, DBP binding stretch occupies residues 426–441; it reads EVLAPVSPIASDDPFA.

Belongs to the adenoviridae E2A DNA-binding protein family. Homomultimerizes on viral ssDNA bound to pTP. Forms a initiation complex with viral polymerase, pTP and hosts NFIA and POU2F1/OCT1. Interacts with host SRCAP.

Its subcellular location is the host nucleus. Functionally, plays a role in the elongation phase of viral strand displacement replication by unwinding the template in an ATP-independent fashion, employing its capacity to form multimers. Also enhances the rate of initiation. Released from template upon second strand synthesis. Assembles in complex with viral pTP, viral pol, host NFIA and host POU2F1/OCT1 on viral origin of replication. Covers the whole ssDNA genome during synthesis. The complementary strand synthesis induces its relese from DNA template. May inhibit cellular transcription mediated by the interaction between host SRCAP and CBP. In Fowl adenovirus A serotype 1 (strain CELO / Phelps) (FAdV-1), this protein is DNA-binding protein.